We begin with the raw amino-acid sequence, 320 residues long: ATP-dependent 6-phosphofructokinase (320 aa).

G12 lines the ATP pocket. Residues 22 to 26 (RSVVR) and 55 to 60 (RYSVSD) contribute to the ADP site. ATP contacts are provided by residues 73–74 (RF) and 103–106 (GDGS). Mg(2+) is bound at residue D104. 126–128 (TID) contacts substrate. The Proton acceptor role is filled by D128. An ADP-binding site is contributed by R155. Residues R163 and 170-172 (MGR) contribute to the substrate site. Residues 186–188 (GCE) and 214–216 (KKH) each bind ADP. Residues E223, R244, and 250–253 (HIQR) each bind substrate.

This sequence belongs to the phosphofructokinase type A (PFKA) family. ATP-dependent PFK group I subfamily. Prokaryotic clade 'B1' sub-subfamily. As to quaternary structure, homotetramer. The cofactor is Mg(2+).

It localises to the cytoplasm. The enzyme catalyses beta-D-fructose 6-phosphate + ATP = beta-D-fructose 1,6-bisphosphate + ADP + H(+). It participates in carbohydrate degradation; glycolysis; D-glyceraldehyde 3-phosphate and glycerone phosphate from D-glucose: step 3/4. Its activity is regulated as follows. Allosterically activated by ADP and other diphosphonucleosides, and allosterically inhibited by phosphoenolpyruvate. Functionally, catalyzes the phosphorylation of D-fructose 6-phosphate to fructose 1,6-bisphosphate by ATP, the first committing step of glycolysis. This chain is ATP-dependent 6-phosphofructokinase, found in Baumannia cicadellinicola subsp. Homalodisca coagulata.